Reading from the N-terminus, the 129-residue chain is uncharacterized protein (129 aa).

This is an uncharacterized protein from Homo sapiens (Human).